A 481-amino-acid polypeptide reads, in one-letter code: Glutamate--tRNA ligase (481 aa).

Residues 11–21 (PSPTGLLHIGN) carry the 'HIGH' region motif. The short motif at 255-259 (KLSKR) is the 'KMSKS' region element. Lys-258 lines the ATP pocket.

This sequence belongs to the class-I aminoacyl-tRNA synthetase family. Glutamate--tRNA ligase type 1 subfamily. In terms of assembly, monomer.

It is found in the cytoplasm. It catalyses the reaction tRNA(Glu) + L-glutamate + ATP = L-glutamyl-tRNA(Glu) + AMP + diphosphate. Its function is as follows. Catalyzes the attachment of glutamate to tRNA(Glu) in a two-step reaction: glutamate is first activated by ATP to form Glu-AMP and then transferred to the acceptor end of tRNA(Glu). This chain is Glutamate--tRNA ligase, found in Streptococcus pyogenes serotype M4 (strain MGAS10750).